The following is a 688-amino-acid chain: Methionine--tRNA ligase (688 aa).

A 'HIGH' region motif is present at residues 13-23 (PYANGQIHIGH). The Zn(2+) site is built by C144, C147, C157, and C160. The short motif at 335–339 (KMSKS) is the 'KMSKS' region element. Residue K338 coordinates ATP. One can recognise a tRNA-binding domain in the interval 582–688 (DFAKIDLRVA…SGAVPGMRIG (107 aa)).

This sequence belongs to the class-I aminoacyl-tRNA synthetase family. MetG type 1 subfamily. In terms of assembly, homodimer. Zn(2+) serves as cofactor.

The protein localises to the cytoplasm. The catalysed reaction is tRNA(Met) + L-methionine + ATP = L-methionyl-tRNA(Met) + AMP + diphosphate. Its function is as follows. Is required not only for elongation of protein synthesis but also for the initiation of all mRNA translation through initiator tRNA(fMet) aminoacylation. The sequence is that of Methionine--tRNA ligase from Cupriavidus pinatubonensis (strain JMP 134 / LMG 1197) (Cupriavidus necator (strain JMP 134)).